Here is a 305-residue protein sequence, read N- to C-terminus: Protein FdhE homolog (305 aa).

Belongs to the FdhE family.

It is found in the cytoplasm. Its function is as follows. Necessary for formate dehydrogenase activity. The chain is Protein FdhE homolog from Actinobacillus pleuropneumoniae serotype 7 (strain AP76).